We begin with the raw amino-acid sequence, 117 residues long: Ribonuclease P protein component (117 aa).

This sequence belongs to the RnpA family. Consists of a catalytic RNA component (M1 or rnpB) and a protein subunit.

The enzyme catalyses Endonucleolytic cleavage of RNA, removing 5'-extranucleotides from tRNA precursor.. Functionally, RNaseP catalyzes the removal of the 5'-leader sequence from pre-tRNA to produce the mature 5'-terminus. It can also cleave other RNA substrates such as 4.5S RNA. The protein component plays an auxiliary but essential role in vivo by binding to the 5'-leader sequence and broadening the substrate specificity of the ribozyme. The chain is Ribonuclease P protein component from Aliivibrio salmonicida (strain LFI1238) (Vibrio salmonicida (strain LFI1238)).